The primary structure comprises 347 residues: NADH-ubiquinone oxidoreductase chain 2 (347 aa).

11 helical membrane-spanning segments follow: residues Met1–Leu21, His25–Met45, Tyr59–Met79, Leu96–Pro116, Val122–Met142, Ile145–Gly165, Ile178–Pro198, Leu200–Met220, Val242–Pro262, Asn274–Met294, and Leu325–Leu345.

It belongs to the complex I subunit 2 family. As to quaternary structure, core subunit of respiratory chain NADH dehydrogenase (Complex I) which is composed of 45 different subunits. Interacts with TMEM242.

Its subcellular location is the mitochondrion inner membrane. It catalyses the reaction a ubiquinone + NADH + 5 H(+)(in) = a ubiquinol + NAD(+) + 4 H(+)(out). Core subunit of the mitochondrial membrane respiratory chain NADH dehydrogenase (Complex I) which catalyzes electron transfer from NADH through the respiratory chain, using ubiquinone as an electron acceptor. Essential for the catalytic activity and assembly of complex I. This chain is NADH-ubiquinone oxidoreductase chain 2, found in Myosorex kihaulei (Kihaule's mouse shrew).